The chain runs to 422 residues: Glutamate-1-semialdehyde 2,1-aminomutase (422 aa).

Lys-264 carries the post-translational modification N6-(pyridoxal phosphate)lysine.

This sequence belongs to the class-III pyridoxal-phosphate-dependent aminotransferase family. HemL subfamily. In terms of assembly, homodimer. Requires pyridoxal 5'-phosphate as cofactor.

It is found in the cytoplasm. The enzyme catalyses (S)-4-amino-5-oxopentanoate = 5-aminolevulinate. Its pathway is porphyrin-containing compound metabolism; protoporphyrin-IX biosynthesis; 5-aminolevulinate from L-glutamyl-tRNA(Glu): step 2/2. The sequence is that of Glutamate-1-semialdehyde 2,1-aminomutase from Clostridium acetobutylicum (strain ATCC 824 / DSM 792 / JCM 1419 / IAM 19013 / LMG 5710 / NBRC 13948 / NRRL B-527 / VKM B-1787 / 2291 / W).